The primary structure comprises 96 residues: Aspartyl/glutamyl-tRNA(Asn/Gln) amidotransferase subunit C (96 aa).

Belongs to the GatC family. As to quaternary structure, heterotrimer of A, B and C subunits.

The enzyme catalyses L-glutamyl-tRNA(Gln) + L-glutamine + ATP + H2O = L-glutaminyl-tRNA(Gln) + L-glutamate + ADP + phosphate + H(+). The catalysed reaction is L-aspartyl-tRNA(Asn) + L-glutamine + ATP + H2O = L-asparaginyl-tRNA(Asn) + L-glutamate + ADP + phosphate + 2 H(+). Functionally, allows the formation of correctly charged Asn-tRNA(Asn) or Gln-tRNA(Gln) through the transamidation of misacylated Asp-tRNA(Asn) or Glu-tRNA(Gln) in organisms which lack either or both of asparaginyl-tRNA or glutaminyl-tRNA synthetases. The reaction takes place in the presence of glutamine and ATP through an activated phospho-Asp-tRNA(Asn) or phospho-Glu-tRNA(Gln). The chain is Aspartyl/glutamyl-tRNA(Asn/Gln) amidotransferase subunit C from Bacillus licheniformis (strain ATCC 14580 / DSM 13 / JCM 2505 / CCUG 7422 / NBRC 12200 / NCIMB 9375 / NCTC 10341 / NRRL NRS-1264 / Gibson 46).